The chain runs to 181 residues: CDP-diacylglycerol--glycerol-3-phosphate 3-phosphatidyltransferase (181 aa).

4 helical membrane passes run 8–28, 35–55, 64–84, and 148–168; these read PNYL…TFYI, MLGA…GYIA, FGKM…IIML, and IIYL…LTII.

The protein belongs to the CDP-alcohol phosphatidyltransferase class-I family.

The protein localises to the cell membrane. It carries out the reaction a CDP-1,2-diacyl-sn-glycerol + sn-glycerol 3-phosphate = a 1,2-diacyl-sn-glycero-3-phospho-(1'-sn-glycero-3'-phosphate) + CMP + H(+). Its pathway is phospholipid metabolism; phosphatidylglycerol biosynthesis; phosphatidylglycerol from CDP-diacylglycerol: step 1/2. This protein catalyzes the committed step to the synthesis of the acidic phospholipids. In Rickettsia bellii (strain RML369-C), this protein is CDP-diacylglycerol--glycerol-3-phosphate 3-phosphatidyltransferase (pgsA).